Consider the following 399-residue polypeptide: MNKNKIVLAYSGGLDTSVAIAWLKKDFDVIAVCMDVGEGKDLQFIHEKALKIGAIESYVIDVKEEFAEAFVLPALQAHAFYEQKYPLVSALSRPLISKKLVDIAHECGATYIAHGCTGKGNDQVRFEIAIAALDPTIEVIAPVRDWHWSREEEIAFAKENGVPIPADLDNPYSVDQNLWGRANECGVLENPWNQAPEEAYDMTVSPEEAPDRPEYIDITFEAGVPIALNGKVLSLANLIIELNQIAGAHGIGRIDHVENRLVGIKSREIYECPGAITLLAAHKEIEDLTFVREVSHFKPILENELSNLIYNGLWYNPATQAILSYLKETQKVVNGIAKVKLYKGHVQVVARQSDNSLYDENLATYTSADSFDQEAAIGFIKLWGLPTQVNAQVNKKGVV.

An ATP-binding site is contributed by 9–17; that stretch reads AYSGGLDTS. Y85 provides a ligand contact to L-citrulline. Position 115 (G115) interacts with ATP. L-aspartate contacts are provided by T117, N121, and D122. N121 serves as a coordination point for L-citrulline. Positions 125, 173, 258, and 270 each coordinate L-citrulline.

This sequence belongs to the argininosuccinate synthase family. Type 1 subfamily. As to quaternary structure, homotetramer.

It is found in the cytoplasm. The catalysed reaction is L-citrulline + L-aspartate + ATP = 2-(N(omega)-L-arginino)succinate + AMP + diphosphate + H(+). It participates in amino-acid biosynthesis; L-arginine biosynthesis; L-arginine from L-ornithine and carbamoyl phosphate: step 2/3. The sequence is that of Argininosuccinate synthase from Streptococcus uberis (strain ATCC BAA-854 / 0140J).